The chain runs to 154 residues: Plastocyanin, chloroplastic (154 aa).

Residues 1–57 (MAALSSAAVTIPSMAPSAPGRRRMRSSLVVRASLGKAAGAAAVAVAASAMLAGGAMA) constitute a chloroplast transit peptide. The Plastocyanin-like domain maps to 58–154 (QEVLLGANGG…AGMVGKVTVN (97 aa)). 4 residues coordinate Cu cation: H94, C139, H142, and M147.

Belongs to the plastocyanin family. Cu(2+) is required as a cofactor.

Its subcellular location is the plastid. The protein resides in the chloroplast thylakoid membrane. Participates in electron transfer between P700 and the cytochrome b6-f complex in photosystem I. This Oryza sativa subsp. indica (Rice) protein is Plastocyanin, chloroplastic (PETE).